Consider the following 57-residue polypeptide: Large ribosomal subunit protein uL30 (57 aa).

It belongs to the universal ribosomal protein uL30 family. As to quaternary structure, part of the 50S ribosomal subunit.

The polypeptide is Large ribosomal subunit protein uL30 (Clostridium perfringens (strain ATCC 13124 / DSM 756 / JCM 1290 / NCIMB 6125 / NCTC 8237 / Type A)).